The chain runs to 166 residues: Large ribosomal subunit protein uL11x (166 aa).

The protein belongs to the universal ribosomal protein uL11 family.

Functionally, binds directly to 26S ribosomal RNA. This is Large ribosomal subunit protein uL11x (RPL12C) from Arabidopsis thaliana (Mouse-ear cress).